Reading from the N-terminus, the 417-residue chain is CinA-like protein (417 aa).

It belongs to the CinA family.

The chain is CinA-like protein from Microcystis aeruginosa (strain NIES-843 / IAM M-2473).